Here is a 253-residue protein sequence, read N- to C-terminus: Giant extracellular hemoglobin linker 1 chain (253 aa).

The 43-residue stretch at 89 to 131 (HHCDDDHLSCKDVAFTCIGHNLVCDGHKDCLNGHDEDEETCSI) folds into the LDL-receptor class A domain. Cystine bridges form between cysteine 91-cysteine 105, cysteine 98-cysteine 118, and cysteine 112-cysteine 129.

As to quaternary structure, disulfide-linked dimer of identical chains. A model is proposed for the subunit structure of the Tylorrhynchus hemoglobin, consisting of 216 polypeptide chains, 192 heme-containing chains, and 24 linker chains.

In terms of biological role, acts as a linker for the assembly of heme-containing chains in the construction of giant hemoglobin. The chain is Giant extracellular hemoglobin linker 1 chain from Tylorrhynchus heterochetus (Japanese palolo worm).